The following is an 845-amino-acid chain: Beta-mannosidase B (845 aa).

Catalysis depends on Glu432, which acts as the Proton donor. Asn717 and Asn723 each carry an N-linked (GlcNAc...) asparagine glycan.

This sequence belongs to the glycosyl hydrolase 2 family. Beta-mannosidase B subfamily.

The enzyme catalyses Hydrolysis of terminal, non-reducing beta-D-mannose residues in beta-D-mannosides.. Its pathway is glycan metabolism; N-glycan degradation. Functionally, exoglycosidase that cleaves the single beta-linked mannose residue from the non-reducing end of beta-mannosidic oligosaccharides of various complexity and length. Prefers mannobiose over mannotriose and has no activity against polymeric mannan. Is also severely restricted by galactosyl substitutions at the +1 subsite. The polypeptide is Beta-mannosidase B (mndB) (Aspergillus clavatus (strain ATCC 1007 / CBS 513.65 / DSM 816 / NCTC 3887 / NRRL 1 / QM 1276 / 107)).